A 158-amino-acid chain; its full sequence is NAD(P)H-quinone oxidoreductase subunit J, chloroplastic (158 aa).

The protein belongs to the complex I 30 kDa subunit family. As to quaternary structure, NDH is composed of at least 16 different subunits, 5 of which are encoded in the nucleus.

The protein resides in the plastid. It localises to the chloroplast thylakoid membrane. It carries out the reaction a plastoquinone + NADH + (n+1) H(+)(in) = a plastoquinol + NAD(+) + n H(+)(out). The enzyme catalyses a plastoquinone + NADPH + (n+1) H(+)(in) = a plastoquinol + NADP(+) + n H(+)(out). Functionally, NDH shuttles electrons from NAD(P)H:plastoquinone, via FMN and iron-sulfur (Fe-S) centers, to quinones in the photosynthetic chain and possibly in a chloroplast respiratory chain. The immediate electron acceptor for the enzyme in this species is believed to be plastoquinone. Couples the redox reaction to proton translocation, and thus conserves the redox energy in a proton gradient. This chain is NAD(P)H-quinone oxidoreductase subunit J, chloroplastic, found in Chloranthus spicatus (Chulantree).